The following is a 127-amino-acid chain: Aspartate 1-decarboxylase (127 aa).

The active-site Schiff-base intermediate with substrate; via pyruvic acid is the Ser-25. A Pyruvic acid (Ser) modification is found at Ser-25. Thr-57 is a binding site for substrate. The Proton donor role is filled by Tyr-58. Substrate is bound at residue 73–75; the sequence is GSA.

This sequence belongs to the PanD family. In terms of assembly, heterooctamer of four alpha and four beta subunits. Pyruvate serves as cofactor. Is synthesized initially as an inactive proenzyme, which is activated by self-cleavage at a specific serine bond to produce a beta-subunit with a hydroxyl group at its C-terminus and an alpha-subunit with a pyruvoyl group at its N-terminus.

It localises to the cytoplasm. The catalysed reaction is L-aspartate + H(+) = beta-alanine + CO2. It participates in cofactor biosynthesis; (R)-pantothenate biosynthesis; beta-alanine from L-aspartate: step 1/1. Its function is as follows. Catalyzes the pyruvoyl-dependent decarboxylation of aspartate to produce beta-alanine. The protein is Aspartate 1-decarboxylase of Laribacter hongkongensis (strain HLHK9).